Reading from the N-terminus, the 318-residue chain is Methionyl-tRNA formyltransferase (318 aa).

Residue 112–115 coordinates (6S)-5,6,7,8-tetrahydrofolate; sequence SILP.

The protein belongs to the Fmt family.

The enzyme catalyses L-methionyl-tRNA(fMet) + (6R)-10-formyltetrahydrofolate = N-formyl-L-methionyl-tRNA(fMet) + (6S)-5,6,7,8-tetrahydrofolate + H(+). Attaches a formyl group to the free amino group of methionyl-tRNA(fMet). The formyl group appears to play a dual role in the initiator identity of N-formylmethionyl-tRNA by promoting its recognition by IF2 and preventing the misappropriation of this tRNA by the elongation apparatus. This is Methionyl-tRNA formyltransferase from Haemophilus influenzae (strain ATCC 51907 / DSM 11121 / KW20 / Rd).